Consider the following 379-residue polypeptide: Retinoic acid receptor RXR-alpha-B (379 aa).

Residues Met1–Ser22 show a composition bias toward polar residues. The segment at Met1–Asp24 is disordered. The interval Met1–Ile53 is modulating. The nuclear receptor DNA-binding region spans Lys51–Glu126. The Zn(2+) site is built by Cys54, Cys57, Cys71, and Cys74. The NR C4-type zinc-finger motif lies at Cys54–Cys74. Positions Lys79–Lys84 are nuclear localization signal. Cys90, Cys96, Cys106, and Cys109 together coordinate Zn(2+). The NR C4-type zinc-finger motif lies at Cys90–Cys109. The hinge stretch occupies residues Lys120–Gly141. One can recognise an NR LBD domain in the interval Asn144–Pro375. Arg233 and Ala244 together coordinate 9-cis-retinoate. Residues Arg233 and Ala244 each contribute to the all-trans-retinoate site. Positions Arg265–Gly285 are required for nuclear export. Positions Ile364–Pro375 are AF-2.

This sequence belongs to the nuclear hormone receptor family. NR2 subfamily. Homodimer. Heterodimer; with a rar molecule. Binds DNA preferentially as a rar/rxr heterodimer. Uniform expression from the blastula to mid-gastrula stages. At 12 hours post-fertilization (hpf), expressed strongly in the tail and weakly elsewhere. At 24 hpf, weak expression in the forebrain, eyes and pharyngeal endoderm and continued expression in the tail mesoderm. At 48 hpf, anterior expression limited to ventral cells underlying the head, medial expression in the pectoral fin bud mesoderm and continued tail expression.

The protein localises to the nucleus. Receptor for retinoic acid that acts as a transcription factor. Forms homo- or heterodimers with retinoic acid receptors (rars) and binds to target response elements in response to their ligands, all-trans or 9-cis retinoic acid, to regulate gene expression in various biological processes. The rar/rxr heterodimers bind to the retinoic acid response elements (RARE) composed of tandem 5'-AGGTCA-3' sites known as DR1-DR5 to regulate transcription. The high affinity ligand for rxrs is 9-cis retinoic acid. In the absence of ligand, the rar/rxr heterodimers associate with a multiprotein complex containing transcription corepressors that induce histone deacetylation, chromatin condensation and transcriptional suppression. On ligand binding, the corepressors dissociate from the receptors and coactivators are recruited leading to transcriptional activation. This chain is Retinoic acid receptor RXR-alpha-B (rxrab), found in Danio rerio (Zebrafish).